A 282-amino-acid chain; its full sequence is Pantothenate synthetase (282 aa).

ATP is bound at residue 30–37 (MGNLHLGH). Histidine 37 acts as the Proton donor in catalysis. Glutamine 61 contributes to the (R)-pantoate binding site. Glutamine 61 is a beta-alanine binding site. 149–152 (GQKD) contributes to the ATP binding site. Glutamine 155 is a (R)-pantoate binding site. Residues isoleucine 178 and 186–189 (MSSR) each bind ATP.

The protein belongs to the pantothenate synthetase family. In terms of assembly, homodimer.

Its subcellular location is the cytoplasm. It carries out the reaction (R)-pantoate + beta-alanine + ATP = (R)-pantothenate + AMP + diphosphate + H(+). Its pathway is cofactor biosynthesis; (R)-pantothenate biosynthesis; (R)-pantothenate from (R)-pantoate and beta-alanine: step 1/1. Its function is as follows. Catalyzes the condensation of pantoate with beta-alanine in an ATP-dependent reaction via a pantoyl-adenylate intermediate. This Shewanella piezotolerans (strain WP3 / JCM 13877) protein is Pantothenate synthetase.